A 338-amino-acid chain; its full sequence is N-acetyl-gamma-glutamyl-phosphate reductase (338 aa).

The active site involves C148.

Belongs to the NAGSA dehydrogenase family. Type 1 subfamily.

The protein localises to the cytoplasm. The enzyme catalyses N-acetyl-L-glutamate 5-semialdehyde + phosphate + NADP(+) = N-acetyl-L-glutamyl 5-phosphate + NADPH + H(+). Its pathway is amino-acid biosynthesis; L-arginine biosynthesis; N(2)-acetyl-L-ornithine from L-glutamate: step 3/4. Functionally, catalyzes the NADPH-dependent reduction of N-acetyl-5-glutamyl phosphate to yield N-acetyl-L-glutamate 5-semialdehyde. This chain is N-acetyl-gamma-glutamyl-phosphate reductase, found in Leptospira interrogans serogroup Icterohaemorrhagiae serovar copenhageni (strain Fiocruz L1-130).